We begin with the raw amino-acid sequence, 81 residues long: ATP synthase subunit c, chloroplastic (81 aa).

Helical transmembrane passes span 3–23 (PLIS…ASIG) and 57–77 (LAFM…LLFA).

This sequence belongs to the ATPase C chain family. F-type ATPases have 2 components, F(1) - the catalytic core - and F(0) - the membrane proton channel. F(1) has five subunits: alpha(3), beta(3), gamma(1), delta(1), epsilon(1). F(0) has four main subunits: a(1), b(1), b'(1) and c(10-14). The alpha and beta chains form an alternating ring which encloses part of the gamma chain. F(1) is attached to F(0) by a central stalk formed by the gamma and epsilon chains, while a peripheral stalk is formed by the delta, b and b' chains.

The protein localises to the plastid. It is found in the chloroplast thylakoid membrane. F(1)F(0) ATP synthase produces ATP from ADP in the presence of a proton or sodium gradient. F-type ATPases consist of two structural domains, F(1) containing the extramembraneous catalytic core and F(0) containing the membrane proton channel, linked together by a central stalk and a peripheral stalk. During catalysis, ATP synthesis in the catalytic domain of F(1) is coupled via a rotary mechanism of the central stalk subunits to proton translocation. In terms of biological role, key component of the F(0) channel; it plays a direct role in translocation across the membrane. A homomeric c-ring of between 10-14 subunits forms the central stalk rotor element with the F(1) delta and epsilon subunits. This chain is ATP synthase subunit c, chloroplastic, found in Pinus koraiensis (Korean pine).